The sequence spans 458 residues: Purple acid phosphatase 23 (458 aa).

Positions 1–19 are cleaved as a signal peptide; the sequence is MTLLIMITLTSISLLLAAA. N-linked (GlcNAc...) asparagine glycans are attached at residues Asn59, Asn121, and Asn136. Fe cation is bound at residue Asp194. Asn200 is a glycosylation site (N-linked (GlcNAc...) asparagine). Asp221 and Tyr224 together coordinate Fe cation. Residue Asp221 participates in Mn(2+) binding. Residue Asn278 participates in Mn(2+) binding. Residue Asn278 participates in substrate binding. Asn331 carries N-linked (GlcNAc...) asparagine glycosylation. His360 serves as a coordination point for Mn(2+). The active-site Proton donor is the His370. His397 contributes to the Mn(2+) binding site. 397–399 contributes to the substrate binding site; sequence HVH. His399 provides a ligand contact to Fe cation. 2 N-linked (GlcNAc...) asparagine glycosylation sites follow: Asn409 and Asn455.

This sequence belongs to the metallophosphoesterase superfamily. Purple acid phosphatase family. In terms of assembly, homodimer. The cofactor is Fe cation. Requires Mn(2+) as cofactor. Specifically expressed in flowers.

It localises to the secreted. It carries out the reaction a phosphate monoester + H2O = an alcohol + phosphate. Its function is as follows. Acid phosphatase activity with ATP, ADP, dATP, pyrophosphate, polyphosphate, phosphoserine and phosphothreonine. Low or no activity with phosphotyrosine, AMP and phytate. This Arabidopsis thaliana (Mouse-ear cress) protein is Purple acid phosphatase 23 (PAP23).